The following is a 629-amino-acid chain: MKSNYDVIVVGGGHAGVEAALASARLNKKTALINLYEDKIATMPCNPSVGGPAKGIVVREIDALGGEMAKAADATALQTKLLNSSRGPGVWALRVQSDKEEYSKYMRNVIKKQKNLDLITKACTGLVYDDNKSVTGIYLDDEIILNAKAVIITTGTYLKSEILKGIDRYESGPNNEKTTKGISKSLIDLGIKLMRFKTGTPARVYRDSVDLSRAIIEPGTDMKLAFSFSTNTYTPIEKQQPCYLIHSTLETKKIIEDNLEKSAMYSGTVESIGPRYCPSFEDKVVRFKEKDTHQIFIEPETLNGDTWYVQGFSTSMPIEVQELMLKSLPGFENVRVKHWAYAIEYDCIDPMQLSPSLELKDVRNLFTAGQINGTSGYEEAAGQGLIAGINASRKIDGLDPIILRRDEAYIGVMIDDLINKGVWEPYRLLTSRAEHRLLLRNDNAETRLKQYGREIGLISDTEWEQYLIYVKEIEQAIKELKEIRFTPKSQLAINLKNKKQADLSHGYSGYEIIKIPTVDINELIEFIPSLQKLKTNQLQSIVIEIRFEGYVKKERQLVDKLVKLERKKIPLDINYSKVDNLATEAKDKLEKIRPLNIGQASRITGVNPADIQMLLFYLKKQYPLESIDD.

11-16 (GGGHAG) is an FAD binding site. 273–287 (GPRYCPSFEDKVVRF) contributes to the NAD(+) binding site.

Belongs to the MnmG family. Homodimer. Heterotetramer of two MnmE and two MnmG subunits. It depends on FAD as a cofactor.

The protein localises to the cytoplasm. Functionally, NAD-binding protein involved in the addition of a carboxymethylaminomethyl (cmnm) group at the wobble position (U34) of certain tRNAs, forming tRNA-cmnm(5)s(2)U34. The polypeptide is tRNA uridine 5-carboxymethylaminomethyl modification enzyme MnmG (Mycoplasma capricolum subsp. capricolum (strain California kid / ATCC 27343 / NCTC 10154)).